The following is a 158-amino-acid chain: Hypoxanthine DNA glycosylase (158 aa).

Residue Asn39 is part of the active site.

Belongs to the uracil-DNA glycosylase (UDG) superfamily. Type 6 (HDG) family.

Excises hypoxanthine, a deamination product of adenine, from double-stranded DNA. Acts on double-stranded DNA containing G/I, T/I, A/I and C/I base pairs, but not on single-stranded inosine-containing DNA. Also has minor xanthine DNA glycosylase activity. Lacks any detectable uracil-DNA glycosylase activity. The polypeptide is Hypoxanthine DNA glycosylase (Methanosarcina acetivorans (strain ATCC 35395 / DSM 2834 / JCM 12185 / C2A)).